A 411-amino-acid chain; its full sequence is O-glucosyltransferase rumi (411 aa).

A signal peptide spans 1-20 (MLINHLIVVLLISLVGTGGA). 4 cysteine pairs are disulfide-bonded: cysteine 64/cysteine 75, cysteine 73/cysteine 378, cysteine 120/cysteine 126, and cysteine 282/cysteine 305. The active-site Proton donor/acceptor is the aspartate 151. Residues 192–197 (ATKLHP) form an interaction with the consensus sequence C-X-S-X-[PA]-C in peptide substrates region. UDP-alpha-D-glucose is bound by residues 229–233 (RGSRT), arginine 237, 276–278 (VSF), and 294–298 (AASFR). The Prevents secretion from ER signature appears at 408–411 (KDEL).

It belongs to the glycosyltransferase 90 family.

The protein resides in the endoplasmic reticulum lumen. Its pathway is protein modification; protein glycosylation. Functionally, protein O-glucosyltransferase. Catalyzes the reaction that attaches glucose through an O-glycosidic linkage to a conserved serine residue found in the consensus sequence C-X-S-X-[PA]-C in epidermal growth factor-like repeats. Regulates Notch signaling by glucosylating Notch in the ER, glucosylation is required for the correct folding and cleavage of Notch. This chain is O-glucosyltransferase rumi, found in Drosophila melanogaster (Fruit fly).